A 219-amino-acid chain; its full sequence is Dephospho-CoA kinase (219 aa).

Residues 8 to 215 enclose the DPCK domain; it reads LVGVTGGIGS…EAAASGPDCQ (208 aa). 16 to 21 provides a ligand contact to ATP; the sequence is GSGKST.

This sequence belongs to the CoaE family.

It localises to the cytoplasm. It carries out the reaction 3'-dephospho-CoA + ATP = ADP + CoA + H(+). Its pathway is cofactor biosynthesis; coenzyme A biosynthesis; CoA from (R)-pantothenate: step 5/5. Catalyzes the phosphorylation of the 3'-hydroxyl group of dephosphocoenzyme A to form coenzyme A. The polypeptide is Dephospho-CoA kinase (Chlorobium luteolum (strain DSM 273 / BCRC 81028 / 2530) (Pelodictyon luteolum)).